A 453-amino-acid chain; its full sequence is Probable phenylalanine--tRNA ligase, mitochondrial (453 aa).

A mitochondrion-targeting transit peptide spans 1 to 27 (MLLTLRVQGARHWLKSTRCLASSAAPA). Substrate-binding positions include 142–145 (TAHQ), Arg164, 171–173 (THY), 178–180 (QAD), Glu285, and Phe310. The FDX-ACB domain occupies 356-453 (SHYPQCTNDL…SVDSFNVQIR (98 aa)).

This sequence belongs to the class-II aminoacyl-tRNA synthetase family.

It localises to the mitochondrion matrix. It carries out the reaction tRNA(Phe) + L-phenylalanine + ATP = L-phenylalanyl-tRNA(Phe) + AMP + diphosphate + H(+). In terms of biological role, is responsible for the charging of tRNA(Phe) with phenylalanine in mitochondrial translation. In Drosophila melanogaster (Fruit fly), this protein is Probable phenylalanine--tRNA ligase, mitochondrial.